A 139-amino-acid chain; its full sequence is Large ribosomal subunit protein uL16 (139 aa).

The protein belongs to the universal ribosomal protein uL16 family. Part of the 50S ribosomal subunit.

In terms of biological role, binds 23S rRNA and is also seen to make contacts with the A and possibly P site tRNAs. This is Large ribosomal subunit protein uL16 from Chlorobium phaeobacteroides (strain DSM 266 / SMG 266 / 2430).